The primary structure comprises 166 residues: Protein adg1 (166 aa).

Residues 1–22 form the signal peptide; sequence MFLRSIFQTLCAVSFLAGSVFA.

It localises to the endoplasmic reticulum. In Schizosaccharomyces pombe (strain 972 / ATCC 24843) (Fission yeast), this protein is Protein adg1 (adg1).